Consider the following 686-residue polypeptide: Tripartite terminase subunit 3 (686 aa).

Residues I220–T227 carry the Walker A motif motif. Residues L315–E320 carry the Walker B motif motif. The active-site For ATPase activity is E320. Active-site for nuclease activity residues include D474, E546, and D658.

It belongs to the herpesviridae TRM3 protein family. Interacts with the terminase subunits TRM1 and TRM2. Interacts with portal protein.

The protein resides in the host nucleus. Functionally, component of the molecular motor that translocates viral genomic DNA in empty capsid during DNA packaging. Forms a tripartite terminase complex together with TRM1 and TRM2 in the host cytoplasm. Once the complex reaches the host nucleus, it interacts with the capsid portal vertex. This portal forms a ring in which genomic DNA is translocated into the capsid. TRM3 carries an RNase H-like nuclease activity that plays an important role for the cleavage of concatemeric viral DNA into unit length genomes. This is Tripartite terminase subunit 3 from Alcelaphine herpesvirus 1 (strain C500) (AlHV-1).